Here is a 436-residue protein sequence, read N- to C-terminus: Putative actin-fragmin kinase DDB_G0268748 (436 aa).

The tract at residues 14–58 (DKNIDSGSSSSNIGGSSSNSSGTTNKRSSGNFNGSSASSSPSSST) is disordered. Positions 18–57 (DSGSSSSNIGGSSSNSSGTTNKRSSGNFNGSSASSSPSSS) are enriched in low complexity.

This sequence belongs to the protein kinase superfamily. AFK Ser/Thr protein kinase family.

The polypeptide is Putative actin-fragmin kinase DDB_G0268748 (Dictyostelium discoideum (Social amoeba)).